Reading from the N-terminus, the 769-residue chain is Protein lethal(2)denticleless (769 aa).

WD repeat units lie at residues 99–129 (CHFNAVFDLEWAPGQMRFVSASGDHTARLWE), 143–174 (GHTRSVKSAAFKRTDPAVFATGGRDGAILIWD), 194–249 (GHTG…KVWD), 264–303 (RHKLPYAGSSTFRGFTNLIVDASGTRLYANCMDNTIYCYN), 320–349 (NSTFYIKSCLSPDGKYLLSGSSDERAYIWN), and 362–393 (GHTVEVTCVAWGSSHDCPIVTCSDDARHKIWR). Positions 196-221 (TGGPGTPVSQRKQRTRTPKMAGGTTS) are disordered. A Phosphothreonine modification is found at T201. S204 carries the phosphoserine modification. Disordered stretches follow at residues 448 to 467 (RLMDQNERTPGSVEKTTTKR), 476 to 562 (AGQE…HVYT), and 655 to 769 (SPRL…VGSD). A Phosphothreonine modification is found at T456. S459 carries the post-translational modification Phosphoserine. The segment covering 503–518 (PSSQETACRHIQLQSI) has biased composition (polar residues). A Phosphoserine modification is found at S524. Over residues 524–533 (SPSKRQKENS) the composition is skewed to basic and acidic residues. The span at 546 to 562 (STPSHSPLSENVNHVYT) shows a compositional bias: polar residues. S655 is subject to Phosphoserine. The segment covering 657–666 (RLQSLRQSEC) has biased composition (polar residues). Residues S679, S691, and S711 each carry the phosphoserine modification. Residues 689 to 704 (AGSSSHSHSQSQPKTP) are compositionally biased toward low complexity. The segment covering 705 to 714 (TSSRRNSETT) has biased composition (polar residues). Positions 728-743 (PAEETTTTNAAPSSSD) are enriched in low complexity. The span at 758–769 (SMRTPTTAVGSD) shows a compositional bias: polar residues.

This sequence belongs to the WD repeat cdt2 family. Component of the DCX(DTL) E3 ubiquitin ligase complex, at least composed of Cul-4, pic/DDB1, l(2)dtl/CDT2 and Roc1a. As to expression, ubiquitously expressed during embryogenesis with no sign of tissue specificity in expression up to stage 17.

It localises to the cytoplasm. The protein operates within protein modification; protein ubiquitination. Substrate-specific adapter of a DCX (DDB1-CUL4-X-box) E3 ubiquitin-protein ligase complex required for cell cycle control. The DCX(DTL) complex, also named CRL4(CDT2) complex, mediates the polyubiquitination and subsequent degradation of E2f during S phase. E2f degradation is necessary to ensure proper development. Substrates require their interaction with PCNA for their polyubiquitination: substrates interact with PCNA via their PIP-box, leading to recruit the DCX(DTL) complex. The chain is Protein lethal(2)denticleless (l(2)dtl) from Drosophila melanogaster (Fruit fly).